The chain runs to 392 residues: Probable tRNA pseudouridine synthase D 1 (392 aa).

Residue aspartate 92 is the Nucleophile of the active site. Residues 167-354 (YFLNYYGVQR…FIGDRRAMIG (188 aa)) enclose the TRUD domain.

Belongs to the pseudouridine synthase TruD family.

It carries out the reaction uridine(13) in tRNA = pseudouridine(13) in tRNA. Functionally, could be responsible for synthesis of pseudouridine from uracil-13 in transfer RNAs. The chain is Probable tRNA pseudouridine synthase D 1 from Methanocaldococcus jannaschii (strain ATCC 43067 / DSM 2661 / JAL-1 / JCM 10045 / NBRC 100440) (Methanococcus jannaschii).